Consider the following 110-residue polypeptide: Large ribosomal subunit protein uL22 (110 aa).

Belongs to the universal ribosomal protein uL22 family. In terms of assembly, part of the 50S ribosomal subunit.

Its function is as follows. This protein binds specifically to 23S rRNA; its binding is stimulated by other ribosomal proteins, e.g. L4, L17, and L20. It is important during the early stages of 50S assembly. It makes multiple contacts with different domains of the 23S rRNA in the assembled 50S subunit and ribosome. In terms of biological role, the globular domain of the protein is located near the polypeptide exit tunnel on the outside of the subunit, while an extended beta-hairpin is found that lines the wall of the exit tunnel in the center of the 70S ribosome. In Marinobacter nauticus (strain ATCC 700491 / DSM 11845 / VT8) (Marinobacter aquaeolei), this protein is Large ribosomal subunit protein uL22.